Consider the following 271-residue polypeptide: Mannosyl-3-phosphoglycerate phosphatase (271 aa).

The active-site Nucleophile is the Asp13. Mg(2+)-binding residues include Asp13, Asp15, and Asp214.

Belongs to the HAD-like hydrolase superfamily. MPGP family. Mg(2+) is required as a cofactor.

Its subcellular location is the cytoplasm. The catalysed reaction is 2-O-(alpha-D-mannosyl)-3-phosphoglycerate + H2O = (2R)-2-O-(alpha-D-mannosyl)-glycerate + phosphate. The polypeptide is Mannosyl-3-phosphoglycerate phosphatase (Escherichia coli (strain 55989 / EAEC)).